The primary structure comprises 529 residues: Peptide chain release factor 3 (529 aa).

The region spanning N11–Q280 is the tr-type G domain. GTP is bound by residues S20–T27, D88–H92, and N142–D145.

It belongs to the TRAFAC class translation factor GTPase superfamily. Classic translation factor GTPase family. PrfC subfamily.

It localises to the cytoplasm. Its function is as follows. Increases the formation of ribosomal termination complexes and stimulates activities of RF-1 and RF-2. It binds guanine nucleotides and has strong preference for UGA stop codons. It may interact directly with the ribosome. The stimulation of RF-1 and RF-2 is significantly reduced by GTP and GDP, but not by GMP. In Pasteurella multocida (strain Pm70), this protein is Peptide chain release factor 3 (prfC).